We begin with the raw amino-acid sequence, 566 residues long: ATP-dependent RNA helicase DBP3 (566 aa).

The interval 1–139 (MSAGKKHARD…TTPNGSAQRN (139 aa)) is disordered. Basic residues predominate over residues 39–58 (DKKKKDKKDKKERKEKKEKK). Basic and acidic residues predominate over residues 81–91 (SEPKPEKEKKE). The segment covering 92–102 (KNNKKDKKDKK) has biased composition (basic residues). The span at 127 to 139 (AATTTPNGSAQRN) shows a compositional bias: polar residues. The short motif at 182–209 (IHFSHLPTSTLTSKKPFASFTAPTPIQA) is the Q motif element. The 185-residue stretch at 212–396 (WPFALSGRDV…EGFMIDPVKA (185 aa)) folds into the Helicase ATP-binding domain. 225–232 (AETGSGKT) serves as a coordination point for ATP. Residues 342 to 345 (DEAD) carry the DEAD box motif. One can recognise a Helicase C-terminal domain in the interval 433–566 (GKEQRLLELL…TEHDKSHSGS (134 aa)).

The protein belongs to the DEAD box helicase family. DDX5/DBP2 subfamily.

The protein localises to the nucleus. It localises to the nucleolus. The catalysed reaction is ATP + H2O = ADP + phosphate + H(+). Functionally, ATP-dependent RNA helicase required for 60S ribosomal subunit synthesis. Involved in efficient pre-rRNA processing, predominantly at site A3, which is necessary for the normal formation of 25S and 5.8S rRNAs. The protein is ATP-dependent RNA helicase DBP3 (DBP3) of Chaetomium globosum (strain ATCC 6205 / CBS 148.51 / DSM 1962 / NBRC 6347 / NRRL 1970) (Soil fungus).